The following is a 261-amino-acid chain: Cytochrome c oxidase subunit 3 (261 aa).

At 1-15 (MTHQTHAYHMVNPSP) the chain is on the mitochondrial matrix side. A helical membrane pass occupies residues 16 to 34 (WPLTGALSALLMTSGLIMW). Over 35 to 40 (FHFNSV) the chain is Mitochondrial intermembrane. A helical transmembrane segment spans residues 41–66 (ALLTLGLTTNMLTMYQWWRDVIREST). Over 67–72 (FQGHHT) the chain is Mitochondrial matrix. A helical transmembrane segment spans residues 73-105 (PNVQKGLRYGMILFIISEVLFFTGFFWAFYHSS). At 106–128 (LAPTPELGGCWPPTGIHPLNPLE) the chain is on the mitochondrial intermembrane side. The helical transmembrane segment at 129–152 (VPLLNTSVLLASGVSITWAHHSLM) threads the bilayer. At 153 to 155 (EGN) the chain is on the mitochondrial matrix side. The helical transmembrane segment at 156-183 (RNHMLQALFITIALGVYFTLLQASEYYE) threads the bilayer. Topologically, residues 184–190 (APFTISD) are mitochondrial intermembrane. Residues 191 to 223 (GVYGSTFFVATGFHGLHVIIGSTFLIVCFFRQL) traverse the membrane as a helical segment. The Mitochondrial matrix segment spans residues 224–232 (KFHFTSSHH). A helical membrane pass occupies residues 233 to 256 (FGFEAAAWYWHFVDVVWLFLYVSI). Residues 257–261 (YWWGS) lie on the Mitochondrial intermembrane side of the membrane.

It belongs to the cytochrome c oxidase subunit 3 family. Component of the cytochrome c oxidase (complex IV, CIV), a multisubunit enzyme composed of 14 subunits. The complex is composed of a catalytic core of 3 subunits MT-CO1, MT-CO2 and MT-CO3, encoded in the mitochondrial DNA, and 11 supernumerary subunits COX4I, COX5A, COX5B, COX6A, COX6B, COX6C, COX7A, COX7B, COX7C, COX8 and NDUFA4, which are encoded in the nuclear genome. The complex exists as a monomer or a dimer and forms supercomplexes (SCs) in the inner mitochondrial membrane with NADH-ubiquinone oxidoreductase (complex I, CI) and ubiquinol-cytochrome c oxidoreductase (cytochrome b-c1 complex, complex III, CIII), resulting in different assemblies (supercomplex SCI(1)III(2)IV(1) and megacomplex MCI(2)III(2)IV(2)).

The protein resides in the mitochondrion inner membrane. It catalyses the reaction 4 Fe(II)-[cytochrome c] + O2 + 8 H(+)(in) = 4 Fe(III)-[cytochrome c] + 2 H2O + 4 H(+)(out). Functionally, component of the cytochrome c oxidase, the last enzyme in the mitochondrial electron transport chain which drives oxidative phosphorylation. The respiratory chain contains 3 multisubunit complexes succinate dehydrogenase (complex II, CII), ubiquinol-cytochrome c oxidoreductase (cytochrome b-c1 complex, complex III, CIII) and cytochrome c oxidase (complex IV, CIV), that cooperate to transfer electrons derived from NADH and succinate to molecular oxygen, creating an electrochemical gradient over the inner membrane that drives transmembrane transport and the ATP synthase. Cytochrome c oxidase is the component of the respiratory chain that catalyzes the reduction of oxygen to water. Electrons originating from reduced cytochrome c in the intermembrane space (IMS) are transferred via the dinuclear copper A center (CU(A)) of subunit 2 and heme A of subunit 1 to the active site in subunit 1, a binuclear center (BNC) formed by heme A3 and copper B (CU(B)). The BNC reduces molecular oxygen to 2 water molecules using 4 electrons from cytochrome c in the IMS and 4 protons from the mitochondrial matrix. This Nanger dama (Dama gazelle) protein is Cytochrome c oxidase subunit 3 (MT-CO3).